The sequence spans 403 residues: Phosphoglycerate kinase (403 aa).

Substrate contacts are provided by residues 21–23 (DFN), Arg-36, 59–62 (HLGR), Arg-119, and Arg-159. ATP is bound by residues Lys-214, Gly-301, Glu-332, and 359–362 (GGDS).

The protein belongs to the phosphoglycerate kinase family. In terms of assembly, monomer.

Its subcellular location is the cytoplasm. The catalysed reaction is (2R)-3-phosphoglycerate + ATP = (2R)-3-phospho-glyceroyl phosphate + ADP. The protein operates within carbohydrate degradation; glycolysis; pyruvate from D-glyceraldehyde 3-phosphate: step 2/5. The protein is Phosphoglycerate kinase of Lactobacillus johnsonii (strain CNCM I-12250 / La1 / NCC 533).